Consider the following 404-residue polypeptide: Argininosuccinate synthase (404 aa).

ATP is bound by residues 10–18 (AYSGGLDTS) and alanine 37. Tyrosine 90 and serine 95 together coordinate L-citrulline. Glycine 120 lines the ATP pocket. The L-aspartate site is built by threonine 122, asparagine 126, and aspartate 127. Residue asparagine 126 coordinates L-citrulline. Arginine 130, serine 181, serine 190, glutamate 266, and tyrosine 278 together coordinate L-citrulline.

Belongs to the argininosuccinate synthase family. Type 1 subfamily. Homotetramer.

It localises to the cytoplasm. The enzyme catalyses L-citrulline + L-aspartate + ATP = 2-(N(omega)-L-arginino)succinate + AMP + diphosphate + H(+). Its pathway is amino-acid biosynthesis; L-arginine biosynthesis; L-arginine from L-ornithine and carbamoyl phosphate: step 2/3. The protein is Argininosuccinate synthase of Erythrobacter litoralis (strain HTCC2594).